The sequence spans 113 residues: MAAKTGSQLERSISTIINVFHQYSRKYGHPDTLNKAEFKEMVNKDLPNFLKREKRNENLLRDIMEDLDTNQDNQLSFEECMMLMGKLIFACHEKLHENNPRGHDHSHGKGCGK.

Position 2 is an N-acetylalanine (A2). 2 EF-hand domains span residues 13-48 (ISTIINVFHQYSRKYGHPDTLNKAEFKEMVNKDLPN) and 55-90 (RNENLLRDIMEDLDTNQDNQLSFEECMMLMGKLIFA). Residue H21 participates in Zn(2+) binding. Ca(2+) contacts are provided by S24 and H29. Residue D31 coordinates Zn(2+). Ca(2+) is bound by residues T32, E37, D68, N70, D72, Q74, and E79. Zn(2+)-binding residues include H92 and H96. The residue at position 107 (H107) is a Pros-methylhistidine.

In terms of assembly, homodimer. Preferentially exists as a heterodimer or heterotetramer with S100A8 known as calprotectin (S100A8/A9). S100A9 interacts with ATP2A2. S100A9 interacts with AGER, and with the heterodimeric complex formed by TLR4 and LY96 in the presence of calcium and/or zinc ions. S100A9 binds quinoline-3-carboxamides in the presence of calcium and/or zinc ions. S100A9 interacts with amyloid-beta protein 40. Calprotectin (S100A8/9) interacts with CEACAM3 and tubulin filaments in a calcium-dependent manner. Heterotetrameric calprotectin (S100A8/A9) interacts with ANXA6 and associates with tubulin filaments in activated monocytes. Calprotectin (S100A8/9) interacts with NCF2/P67PHOX, RAC1, RAC2, CYBA and CYBB. Calprotectin (S100A8/9) interacts with NOS2 to form the iNOS-S100A8/A9 transnitrosylase complex; induced by LDL(ox). Calprotectin (S100A8/9) interacts with CD69. Post-translationally, phosphorylated. Phosphorylation inhibits activation of tubulin polymerization. Methylation at His-107 by METTL9 reduces zinc-binding without affecting heterodimerization with S100A8. As to expression, highly expressed at sites of inflammation.

The protein localises to the secreted. The protein resides in the cytoplasm. It is found in the cytoskeleton. It localises to the cell membrane. S100A9 is a calcium- and zinc-binding protein which plays a prominent role in the regulation of inflammatory processes and immune response. It can induce neutrophil chemotaxis, adhesion, can increase the bactericidal activity of neutrophils by promoting phagocytosis via activation of SYK, PI3K/AKT, and ERK1/2 and can induce degranulation of neutrophils by a MAPK-dependent mechanism. Predominantly found as calprotectin (S100A8/A9) which has a wide plethora of intra- and extracellular functions. The intracellular functions include: facilitating leukocyte arachidonic acid trafficking and metabolism, modulation of the tubulin-dependent cytoskeleton during migration of phagocytes and activation of the neutrophilic NADPH-oxidase. Also participates in regulatory T-cell differentiation together with CD69. Activates NADPH-oxidase by facilitating the enzyme complex assembly at the cell membrane, transferring arachidonic acid, an essential cofactor, to the enzyme complex and S100A8 contributes to the enzyme assembly by directly binding to NCF2/P67PHOX. The extracellular functions involve pro-inflammatory, antimicrobial, oxidant-scavenging and apoptosis-inducing activities. Its pro-inflammatory activity includes recruitment of leukocytes, promotion of cytokine and chemokine production, and regulation of leukocyte adhesion and migration. Acts as an alarmin or a danger associated molecular pattern (DAMP) molecule and stimulates innate immune cells via binding to pattern recognition receptors such as Toll-like receptor 4 (TLR4) and receptor for advanced glycation endproducts (AGER). Binding to TLR4 and AGER activates the MAP-kinase and NF-kappa-B signaling pathways resulting in the amplification of the pro-inflammatory cascade. Has antimicrobial activity towards bacteria and fungi and exerts its antimicrobial activity probably via chelation of Zn(2+) which is essential for microbial growth. Can induce cell death via autophagy and apoptosis and this occurs through the cross-talk of mitochondria and lysosomes via reactive oxygen species (ROS) and the process involves BNIP3. Can regulate neutrophil number and apoptosis by an anti-apoptotic effect; regulates cell survival via ITGAM/ITGB and TLR4 and a signaling mechanism involving MEK-ERK. Its role as an oxidant scavenger has a protective role in preventing exaggerated tissue damage by scavenging oxidants. The iNOS-S100A8/A9 transnitrosylase complex is proposed to direct selective inflammatory stimulus-dependent S-nitrosylation of multiple targets such as GAPDH, NXA5, EZR, MSN and VIM by recognizing a [IL]-x-C-x-x-[DE] motif. This is Protein S100-A9 (S100a9) from Rattus norvegicus (Rat).